We begin with the raw amino-acid sequence, 245 residues long: DNA polymerase sliding clamp 1 (245 aa).

Belongs to the PCNA family. In terms of assembly, homotrimer. The subunits circularize to form a toroid; DNA passes through its center. Replication factor C (RFC) is required to load the toroid on the DNA.

Sliding clamp subunit that acts as a moving platform for DNA processing. Responsible for tethering the catalytic subunit of DNA polymerase and other proteins to DNA during high-speed replication. This Sulfurisphaera ohwakuensis protein is DNA polymerase sliding clamp 1.